We begin with the raw amino-acid sequence, 427 residues long: MSTSFENKATNRGIITFTISQDEIKPALDQAFNKVKKDLNVPGFRKGHMPRTVFNQKFGEEALYENALNLVLPKAYEAAVAELGLDVVAQPKIDVVSMEKGQDWKLTAEVVTKPEVKLGDYKDLSVEVDASKEVSAEEVDAKVERERNNLAELTVKDGEAAQGDTVVIDFVGSVDGVEFDGGKGDNFSLELGSGQFIPGFEEQLVGSKAGQTVDVNVTFPEDYQAEDLAGKDAKFVTTIHEVKTKEVPALDDELAKDIDDEVETLDELKAKYRKELESAKEIAFDDAVEGAAIELAVANAEIVELPEEMVHDEVHRAMNEFMGNMQRQGISPEMYFQLTGTTEEDLHKQYQADADKRVKTNLVIEAIAAAEGFEATDEEIEKEITDLASEYNMEADQVRGLLSADMLKHDIAMKKAVDVITSSATVK.

Positions 163–248 (GDTVVIDFVG…IHEVKTKEVP (86 aa)) constitute a PPIase FKBP-type domain.

It belongs to the FKBP-type PPIase family. Tig subfamily.

Its subcellular location is the cytoplasm. It carries out the reaction [protein]-peptidylproline (omega=180) = [protein]-peptidylproline (omega=0). Its function is as follows. Involved in protein export. Acts as a chaperone by maintaining the newly synthesized protein in an open conformation. Functions as a peptidyl-prolyl cis-trans isomerase. This chain is Trigger factor, found in Streptococcus agalactiae serotype III (strain NEM316).